Reading from the N-terminus, the 330-residue chain is Aspartate--ammonia ligase (330 aa).

This sequence belongs to the class-II aminoacyl-tRNA synthetase family. AsnA subfamily.

The protein resides in the cytoplasm. It catalyses the reaction L-aspartate + NH4(+) + ATP = L-asparagine + AMP + diphosphate + H(+). It functions in the pathway amino-acid biosynthesis; L-asparagine biosynthesis; L-asparagine from L-aspartate (ammonia route): step 1/1. The polypeptide is Aspartate--ammonia ligase (Escherichia coli O139:H28 (strain E24377A / ETEC)).